A 247-amino-acid polypeptide reads, in one-letter code: UPF0246 protein LSEI_2080 (247 aa).

The protein belongs to the UPF0246 family.

The sequence is that of UPF0246 protein LSEI_2080 from Lacticaseibacillus paracasei (strain ATCC 334 / BCRC 17002 / CCUG 31169 / CIP 107868 / KCTC 3260 / NRRL B-441) (Lactobacillus paracasei).